The sequence spans 664 residues: Acetolactate synthase 2, chloroplastic (664 aa).

Residues 1 to 34 are compositionally biased toward low complexity; sequence MAAAAAAPSPSFSKTLSSSSSKSSTLLPRSTFPF. A disordered region spans residues 1-51; the sequence is MAAAAAAPSPSFSKTLSSSSSKSSTLLPRSTFPFPHHPHKTTPPPLHLTPT. The N-terminal 91 residues, 1–91, are a transit peptide targeting the chloroplast; sequence MAAAAAAPSP…VSRFAPDEPR (91 aa). E138 is a thiamine diphosphate binding site. C158 and C304 form a disulfide bridge. Residues R240, 346 to 367, and 389 to 408 contribute to the FAD site; these read HGTV…FGVR and DIDS…ICAD. The segment at 481-561 is thiamine pyrophosphate binding; the sequence is QHQMWAAQYY…VKIMLLNNQH (81 aa). Mg(2+)-binding residues include D532 and N559.

Belongs to the TPP enzyme family. Mg(2+) is required as a cofactor. Thiamine diphosphate serves as cofactor.

The protein localises to the plastid. It localises to the chloroplast. The catalysed reaction is 2 pyruvate + H(+) = (2S)-2-acetolactate + CO2. The protein operates within amino-acid biosynthesis; L-isoleucine biosynthesis; L-isoleucine from 2-oxobutanoate: step 1/4. It participates in amino-acid biosynthesis; L-valine biosynthesis; L-valine from pyruvate: step 1/4. In Nicotiana tabacum (Common tobacco), this protein is Acetolactate synthase 2, chloroplastic (ALS SURB).